The sequence spans 319 residues: Acetyl-coenzyme A carboxylase carboxyl transferase subunit beta, chloroplastic (319 aa).

Positions 47–319 constitute a CoA carboxyltransferase N-terminal domain; sequence LWVQCDNCES…ELFYVLQSSS (273 aa). Zn(2+) is bound by residues Cys-51, Cys-54, Cys-70, and Cys-73. The segment at 51 to 73 adopts a C4-type zinc-finger fold; sequence CDNCESLLYIRFLRENKSVCEEC.

This sequence belongs to the AccD/PCCB family. In terms of assembly, acetyl-CoA carboxylase is a heterohexamer composed of biotin carboxyl carrier protein, biotin carboxylase and 2 subunits each of ACCase subunit alpha and ACCase plastid-coded subunit beta (accD). Zn(2+) serves as cofactor.

It localises to the plastid. The protein resides in the chloroplast stroma. The enzyme catalyses N(6)-carboxybiotinyl-L-lysyl-[protein] + acetyl-CoA = N(6)-biotinyl-L-lysyl-[protein] + malonyl-CoA. It participates in lipid metabolism; malonyl-CoA biosynthesis; malonyl-CoA from acetyl-CoA: step 1/1. Functionally, component of the acetyl coenzyme A carboxylase (ACC) complex. Biotin carboxylase (BC) catalyzes the carboxylation of biotin on its carrier protein (BCCP) and then the CO(2) group is transferred by the transcarboxylase to acetyl-CoA to form malonyl-CoA. The polypeptide is Acetyl-coenzyme A carboxylase carboxyl transferase subunit beta, chloroplastic (Picea abies (Norway spruce)).